Here is a 365-residue protein sequence, read N- to C-terminus: Alanine racemase (365 aa).

The Proton acceptor; specific for D-alanine role is filled by Lys-35. Lys-35 bears the N6-(pyridoxal phosphate)lysine mark. Substrate is bound at residue Arg-130. The active-site Proton acceptor; specific for L-alanine is the Tyr-256. Met-304 lines the substrate pocket.

Belongs to the alanine racemase family. Requires pyridoxal 5'-phosphate as cofactor.

It catalyses the reaction L-alanine = D-alanine. It participates in amino-acid biosynthesis; D-alanine biosynthesis; D-alanine from L-alanine: step 1/1. Functionally, catalyzes the interconversion of L-alanine and D-alanine. May also act on other amino acids. This Polaromonas naphthalenivorans (strain CJ2) protein is Alanine racemase (alr).